The sequence spans 101 residues: Small ribosomal subunit protein bS18c (101 aa).

The protein belongs to the bacterial ribosomal protein bS18 family. Part of the 30S ribosomal subunit.

Its subcellular location is the plastid. The protein localises to the chloroplast. The sequence is that of Small ribosomal subunit protein bS18c from Populus alba (White poplar).